Reading from the N-terminus, the 333-residue chain is MDPFRKAIKGYDHDRIPVWFMRQAGRYLPSYMKYRQRMGIEEMMSSPDVIVDVTHDPVDRIGVDAAIIFADITTPLSGMGLRVRFLDSVGPVVENNIEKSGISAVEEFDPSSFSHPVLKAISKYRERYADPLIGFAGGPVTLLSYIISDGVDRDLFRVKRMMITEEKAYQAVMTRLTDMIIEFARMQISAGVDAFQIFDSWAGYLSPGEYEHFVKPYVYDILQELSGSIPTIYFSTMTSSYVADMDLPADFYSIDWRIDMKRFSAEIPDEKGIQGNLDPAIVNYDYALHEASKIVEAASGRDRYIFNTGHGLLPSTDPEKLKRLVEYVHSVNL.

Substrate-binding positions include 22–26 (RQAGR), Asp71, Tyr145, Ser200, and His310.

This sequence belongs to the uroporphyrinogen decarboxylase family. As to quaternary structure, homodimer.

Its subcellular location is the cytoplasm. The catalysed reaction is uroporphyrinogen III + 4 H(+) = coproporphyrinogen III + 4 CO2. Its pathway is porphyrin-containing compound metabolism; protoporphyrin-IX biosynthesis; coproporphyrinogen-III from 5-aminolevulinate: step 4/4. Functionally, catalyzes the decarboxylation of four acetate groups of uroporphyrinogen-III to yield coproporphyrinogen-III. The protein is Uroporphyrinogen decarboxylase of Thermoplasma acidophilum (strain ATCC 25905 / DSM 1728 / JCM 9062 / NBRC 15155 / AMRC-C165).